Consider the following 314-residue polypeptide: Homoserine O-acetyltransferase (314 aa).

Cysteine 142 acts as the Acyl-thioester intermediate in catalysis. Residues lysine 163 and serine 192 each coordinate substrate. Histidine 235 serves as the catalytic Proton acceptor. Glutamate 237 is an active-site residue. Arginine 249 provides a ligand contact to substrate.

This sequence belongs to the MetA family.

Its subcellular location is the cytoplasm. It catalyses the reaction L-homoserine + acetyl-CoA = O-acetyl-L-homoserine + CoA. The protein operates within amino-acid biosynthesis; L-methionine biosynthesis via de novo pathway; O-acetyl-L-homoserine from L-homoserine: step 1/1. In terms of biological role, transfers an acetyl group from acetyl-CoA to L-homoserine, forming acetyl-L-homoserine. The chain is Homoserine O-acetyltransferase from Streptococcus thermophilus (strain ATCC BAA-250 / LMG 18311).